A 632-amino-acid chain; its full sequence is tRNA uridine 5-carboxymethylaminomethyl modification enzyme MnmG (632 aa).

FAD is bound at residue 14–19; sequence GAGHAG. 273–287 contributes to the NAD(+) binding site; the sequence is GPRYCPSFEDKIMRF.

Belongs to the MnmG family. Homodimer. Heterotetramer of two MnmE and two MnmG subunits. Requires FAD as cofactor.

The protein resides in the cytoplasm. Its function is as follows. NAD-binding protein involved in the addition of a carboxymethylaminomethyl (cmnm) group at the wobble position (U34) of certain tRNAs, forming tRNA-cmnm(5)s(2)U34. This is tRNA uridine 5-carboxymethylaminomethyl modification enzyme MnmG from Clostridium novyi (strain NT).